A 161-amino-acid chain; its full sequence is Epoxidase gkaX (161 aa).

Positions 1 to 18 (MSLSTSLRLLRLLPAISS) are cleaved as a signal peptide. Residue Asn-45 is glycosylated (N-linked (GlcNAc...) asparagine). The next 3 helical transmembrane spans lie at 59 to 79 (WQWILIIGYPLNYLFGILNLV), 92 to 112 (IWYVLGLFFSVGHMLFVKMAL), and 139 to 159 (WVRALITDLPAWICWIMAAVS).

It belongs to the epoxidase xenD family.

The protein resides in the membrane. Its pathway is mycotoxin biosynthesis. Functionally, epoxidase; part of the gene cluster that mediates the biosynthesis of GKK1032, fungal natural products containing a macrocyclic para-cyclophane connected to a decahydrofluorene ring system that show potent antitumor activities. Within the pathway, gkaX functions synergistically with gkaB and gkaZ to form the cyclophane. The pathway begins with the PKS-NRPS gkaA which, with the help of the trans-enoyl reductase gkaC, synthesizes the polyketide-tyrosyl acyl thioester product which can be reductively off-loaded by the terminal reductase (R) domain in gkaA. The alpha/beta hydrolase gkaG is then required to catalyze the subsequent Knoevenagel condensation that affords the 3-pyrrolin-2-one ring, whereas the three proteins gkaB, gkaX and gkaZ then function synergistically to form the cyclophane. In Penicillium citrinum, this protein is Epoxidase gkaX.